Here is a 691-residue protein sequence, read N- to C-terminus: Proprotein convertase subtilisin/kexin type 9 (691 aa).

The N-terminal stretch at 1-30 is a signal peptide; that stretch reads MGIRCSTWLRWPLSPQLLLLLLLCPTGSRA. Positions 31-151 are excised as a propeptide; that stretch reads QDEDGDYEEL…IEEDSLVFAQ (121 aa). A Sulfotyrosine modification is found at Tyr37. Ser46 bears the Phosphoserine mark. The 288-residue stretch at 154–441 folds into the Peptidase S8 domain; the sequence is PWNLERIIPA…QRVLTPNRVA (288 aa). Residues Asp185 and His225 each act as charge relay system in the active site. 2 disulfide bridges follow: Cys222–Cys254 and Cys322–Cys357. The Charge relay system role is filled by Ser385. Residues 449-691 are C-terminal domain; the sequence is ETGGQLLCRT…PSAKASWVHQ (243 aa). 3 cysteine pairs are disulfide-bonded: Cys456/Cys526, Cys476/Cys525, and Cys485/Cys508. Positions 495 to 497 match the Cell attachment site motif; sequence RGD. Asn532 carries an N-linked (GlcNAc...) asparagine glycan. 6 cysteine pairs are disulfide-bonded: Cys533/Cys600, Cys551/Cys599, Cys561/Cys587, Cys607/Cys678, Cys625/Cys677, and Cys634/Cys653. At Ser687 the chain carries Phosphoserine.

Belongs to the peptidase S8 family. As to quaternary structure, monomer. Can self-associate to form dimers and higher multimers which may have increased LDLR degrading activity. The precursor protein but not the mature protein may form multimers. Interacts with APOB, VLDLR, LRP8/APOER2 and BACE1. The full-length immature form (pro-PCSK9) interacts with SCNN1A, SCNN1B and SCNN1G. The pro-PCSK9 form (via C-terminal domain) interacts with LDLR. Interacts (via the C-terminal domain) with ANXA2 (via repeat Annexin 1); the interaction inhibits the degradation of LDLR. The cofactor is Ca(2+). In terms of processing, cleavage by furin and PCSK5 generates a truncated inactive protein that is unable to induce LDLR degradation. Post-translationally, undergoes autocatalytic cleavage in the endoplasmic reticulum to release the propeptide from the N-terminus and the cleavage of the propeptide is strictly required for its maturation and activation. The cleaved propeptide however remains associated with the catalytic domain through non-covalent interactions, preventing potential substrates from accessing its active site. As a result, it is secreted from cells as a propeptide-containing, enzymatically inactive protein. Phosphorylation protects the propeptide against proteolysis. As to expression, highly expressed in 12-day embryo. In the adult, strongly expressed in liver, small intestine, jejunum, and to a lesser extent in kidney, lung, spleen and thymus. Expression in the liver is up-regulated following partial hepatectomy.

It localises to the cytoplasm. Its subcellular location is the secreted. The protein resides in the endosome. The protein localises to the lysosome. It is found in the cell surface. It localises to the endoplasmic reticulum. Its subcellular location is the golgi apparatus. Its activity is regulated as follows. Its proteolytic activity is autoinhibited by the non-covalent binding of the propeptide to the catalytic domain. Inhibited by EGTA. Functionally, crucial player in the regulation of plasma cholesterol homeostasis. Binds to low-density lipid receptor family members: low density lipoprotein receptor (LDLR), very low density lipoprotein receptor (VLDLR), apolipoprotein E receptor (LRP1/APOER) and apolipoprotein receptor 2 (LRP8/APOER2), and promotes their degradation in intracellular acidic compartments. Acts via a non-proteolytic mechanism to enhance the degradation of the hepatic LDLR through a clathrin LDLRAP1/ARH-mediated pathway. May prevent the recycling of LDLR from endosomes to the cell surface or direct it to lysosomes for degradation. Can induce ubiquitination of LDLR leading to its subsequent degradation. Inhibits intracellular degradation of APOB via the autophagosome/lysosome pathway in a LDLR-independent manner. Involved in the disposal of non-acetylated intermediates of BACE1 in the early secretory pathway. Inhibits epithelial Na(+) channel (ENaC)-mediated Na(+) absorption by reducing ENaC surface expression primarily by increasing its proteasomal degradation. Regulates neuronal apoptosis via modulation of LRP8/APOER2 levels and related anti-apoptotic signaling pathways. This Rattus norvegicus (Rat) protein is Proprotein convertase subtilisin/kexin type 9 (Pcsk9).